Reading from the N-terminus, the 317-residue chain is Iron-uptake system-binding protein (317 aa).

An N-terminal signal peptide occupies residues 1 to 19 (MKKISLTLLILLLALTAAA). A lipid anchor (N-palmitoyl cysteine) is attached at Cys20. The S-diacylglycerol cysteine moiety is linked to residue Cys20. Residues 57–317 (IAITGSVESM…KAAAEKLTQN (261 aa)) enclose the Fe/B12 periplasmic-binding domain.

This sequence belongs to the bacterial solute-binding protein 8 family. In terms of assembly, the complex is composed of one ATP-binding protein (YusV), two transmembrane proteins (FeuB and FeuC) and a solute-binding protein (FeuA).

The protein localises to the cell membrane. It is found in the cytoplasm. The protein resides in the membrane raft. Its function is as follows. Involved in the uptake of iron. Part of the ABC transporter complex FeuABC/YusV involved in import of the catecholate siderophores bacillibactin and enterobactin. The sequence is that of Iron-uptake system-binding protein (feuA) from Bacillus subtilis (strain 168).